The following is a 208-amino-acid chain: Outer-membrane lipoprotein carrier protein (208 aa).

The N-terminal stretch at 1–22 (MKNLLCAVMLTSPLLYSTAVFA) is a signal peptide.

The protein belongs to the LolA family. In terms of assembly, monomer.

It localises to the periplasm. In terms of biological role, participates in the translocation of lipoproteins from the inner membrane to the outer membrane. Only forms a complex with a lipoprotein if the residue after the N-terminal Cys is not an aspartate (The Asp acts as a targeting signal to indicate that the lipoprotein should stay in the inner membrane). The protein is Outer-membrane lipoprotein carrier protein of Shewanella putrefaciens (strain CN-32 / ATCC BAA-453).